The primary structure comprises 294 residues: tRNA dimethylallyltransferase (294 aa).

G10–T17 contacts ATP. T12 to T17 provides a ligand contact to substrate. An interaction with substrate tRNA region spans residues D35 to Q38.

It belongs to the IPP transferase family. As to quaternary structure, monomer. The cofactor is Mg(2+).

The enzyme catalyses adenosine(37) in tRNA + dimethylallyl diphosphate = N(6)-dimethylallyladenosine(37) in tRNA + diphosphate. Functionally, catalyzes the transfer of a dimethylallyl group onto the adenine at position 37 in tRNAs that read codons beginning with uridine, leading to the formation of N6-(dimethylallyl)adenosine (i(6)A). The polypeptide is tRNA dimethylallyltransferase (Streptococcus pneumoniae (strain Hungary19A-6)).